The chain runs to 76 residues: uncharacterized protein (76 aa).

This is an uncharacterized protein from Human cytomegalovirus (strain AD169) (HHV-5).